A 74-amino-acid polypeptide reads, in one-letter code: Imcroporin (74 aa).

The signal sequence occupies residues 1-22; it reads MKFQYLLAVFLIVLVVTDHCQA. K39 is subject to Lysine amide; partial. Residues 45 to 74 constitute a propeptide that is removed on maturation; sequence QLEARFEPKQRNFRKRELDFEKLFANMPDY.

Belongs to the non-disulfide-bridged peptide (NDBP) superfamily. Short antimicrobial peptide (group 4) family. Expressed by the venom gland.

The protein resides in the secreted. Its subcellular location is the target cell membrane. Has potent antibacterial activity against Gram-positive bacteria M.luteus, B.thuringiensis, S.aureus and B.subtilis, but not Gram-negative bacteria. Shows a weak cytotoxicity effect against mammalian cell lines and relatively low hemolytic activity against human erythrocytes. The chain is Imcroporin from Isometrus maculatus (Lesser brown scorpion).